The sequence spans 147 residues: MNNILVINGPNLNLLGKREPDIYGNITLENINQKIKLHFKNEDLKIHFFQSNEEGKIIDKIIESEKKYNAIVINPAAYSHYSIAILDAMRSINIPVVEVHLSNIYKREEYRKKSVTAEASLGVISGFGYYGYIMAIEFILNNLVREK.

The active-site Proton acceptor is the Tyr23. Substrate-binding residues include Asn74, His80, and Asp87. The active-site Proton donor is the His100. Residues 101 to 102 (LS) and Arg111 contribute to the substrate site.

The protein belongs to the type-II 3-dehydroquinase family. Homododecamer.

The catalysed reaction is 3-dehydroquinate = 3-dehydroshikimate + H2O. It participates in metabolic intermediate biosynthesis; chorismate biosynthesis; chorismate from D-erythrose 4-phosphate and phosphoenolpyruvate: step 3/7. In terms of biological role, catalyzes a trans-dehydration via an enolate intermediate. In Clostridium botulinum (strain Okra / Type B1), this protein is 3-dehydroquinate dehydratase.